A 286-amino-acid chain; its full sequence is Ribosomal RNA small subunit methyltransferase A (286 aa).

The S-adenosyl-L-methionine site is built by His11, Leu13, Gly44, Glu65, Asp90, and Asn115.

Belongs to the class I-like SAM-binding methyltransferase superfamily. rRNA adenine N(6)-methyltransferase family. RsmA subfamily.

Its subcellular location is the cytoplasm. The catalysed reaction is adenosine(1518)/adenosine(1519) in 16S rRNA + 4 S-adenosyl-L-methionine = N(6)-dimethyladenosine(1518)/N(6)-dimethyladenosine(1519) in 16S rRNA + 4 S-adenosyl-L-homocysteine + 4 H(+). Its function is as follows. Specifically dimethylates two adjacent adenosines (A1518 and A1519) in the loop of a conserved hairpin near the 3'-end of 16S rRNA in the 30S particle. May play a critical role in biogenesis of 30S subunits. The chain is Ribosomal RNA small subunit methyltransferase A from Nostoc punctiforme (strain ATCC 29133 / PCC 73102).